Consider the following 311-residue polypeptide: Putative mitochondrial transporter UCP3 (311 aa).

At 1 to 10 (MVGLKPSEVP) the chain is on the mitochondrial intermembrane side. The helical transmembrane segment at 11–32 (PTTAVKFLGAGTAACFADLLTF) threads the bilayer. Solcar repeat units lie at residues 11–105 (PTTA…VKQF), 114–205 (SSIT…IKEK), and 214–299 (DNFP…LKRA). Over 33-76 (PLDTAKVRLQIQGENQATQAARRIQYRGVLGTILTMVRTEGPRS) the chain is Mitochondrial matrix. A helical membrane pass occupies residues 77–99 (PYNGLVAGLQRQMSFASIRIGLY). The Mitochondrial intermembrane portion of the chain corresponds to 100–119 (DSVKQFYTPKGSDHSSITTR). A helical membrane pass occupies residues 120 to 136 (ILAGCTTGAMAVSCAQP). At 137–182 (TDVVKVRFQASIHLGAGSNRKYSGTMDAYRTIAREEGVRGLWKGTL) the chain is on the mitochondrial matrix side. The helical transmembrane segment at 183-199 (PNITRNAIVNCAEMVTY) threads the bilayer. Topologically, residues 200–216 (DIIKEKLLDYHLLTDNF) are mitochondrial intermembrane. The helical transmembrane segment at 217-236 (PCHLISAFGAGFCATVVASP) threads the bilayer. Residues 237 to 270 (VDVVKTRYMNSPPGQYCSPLDCMLKMVTQEGPTA) lie on the Mitochondrial matrix side of the membrane. Residues 271–293 (FYKGFTPSFLRLGTWNVVMFVTY) traverse the membrane as a helical segment. Positions 278-300 (SFLRLGTWNVVMFVTYEQLKRAL) are purine nucleotide binding. Topologically, residues 294 to 311 (EQLKRALMKVQMLRESPF) are mitochondrial intermembrane.

It belongs to the mitochondrial carrier (TC 2.A.29) family. Interacts with HAX1; the interaction is direct and calcium-dependent.

The protein resides in the mitochondrion inner membrane. Functionally, putative transmembrane transporter that plays a role in mitochondrial metabolism via an as yet unclear mechanism. Originally, this mitochondrial protein was thought to act as a proton transmembrane transporter from the mitochondrial intermembrane space into the matrix, causing proton leaks through the inner mitochondrial membrane, thereby uncoupling mitochondrial membrane potential generation from ATP synthesis. However, this function is controversial and uncoupling may not be the function, or at least not the main function, but rather a consequence of more conventional metabolite transporter activity. The chain is Putative mitochondrial transporter UCP3 from Canis lupus familiaris (Dog).